We begin with the raw amino-acid sequence, 257 residues long: 1-(5-phosphoribosyl)-5-[(5-phosphoribosylamino)methylideneamino] imidazole-4-carboxamide isomerase (257 aa).

The protein belongs to the HisA/HisF family.

Its subcellular location is the cytoplasm. The catalysed reaction is 1-(5-phospho-beta-D-ribosyl)-5-[(5-phospho-beta-D-ribosylamino)methylideneamino]imidazole-4-carboxamide = 5-[(5-phospho-1-deoxy-D-ribulos-1-ylimino)methylamino]-1-(5-phospho-beta-D-ribosyl)imidazole-4-carboxamide. Its pathway is amino-acid biosynthesis; L-histidine biosynthesis; L-histidine from 5-phospho-alpha-D-ribose 1-diphosphate: step 4/9. The polypeptide is 1-(5-phosphoribosyl)-5-[(5-phosphoribosylamino)methylideneamino] imidazole-4-carboxamide isomerase (his-7) (Neurospora crassa (strain ATCC 24698 / 74-OR23-1A / CBS 708.71 / DSM 1257 / FGSC 987)).